The chain runs to 161 residues: Lipid droplet assembly factor 1 (161 aa).

Topologically, residues 1–43 (MAEEEPSSVSRDLQELQRKLGLLLESFQNNSKVVAFMKSPVGR) are cytoplasmic. A helical transmembrane segment spans residues 44 to 61 (FLDRHPFLVLTVLMFVTM). At 62–67 (SAIPVG) the chain is on the lumenal side. A helical membrane pass occupies residues 68 to 87 (FFLLIVVLTSLGALMGAILL). Residues 88-93 (EGLVIS) lie on the Cytoplasmic side of the membrane. A helical transmembrane segment spans residues 94 to 110 (VCGLSLLCILCGLGFVS). At 111-116 (LALSGI) the chain is on the lumenal side. The helical transmembrane segment at 117–133 (TMMSYVVVSCLMSYWFS) threads the bilayer. Over 134–161 (PSRPPTQQHANIDSQLAMKFTESEKLGL) the chain is Cytoplasmic.

This sequence belongs to the LDAF1 family. In terms of assembly, interacts with BSCL2/seipin to form an oligomeric complex.

The protein localises to the endoplasmic reticulum membrane. The protein resides in the lipid droplet. In terms of biological role, plays an important role in the formation of lipid droplets (LD) which are storage organelles at the center of lipid and energy homeostasis. In association with BSCL2/seipin, defines the sites of LD formation in the endoplasmic reticulum. The sequence is that of Lipid droplet assembly factor 1 from Rattus norvegicus (Rat).